The primary structure comprises 340 residues: tRNA N6-adenosine threonylcarbamoyltransferase (340 aa).

Residues His-111 and His-115 each coordinate Fe cation. Substrate is bound by residues 134–138, Asp-167, Gly-180, and Asn-273; that span reads IISGA. Asp-301 is a binding site for Fe cation.

Belongs to the KAE1 / TsaD family. It depends on Fe(2+) as a cofactor.

The protein resides in the cytoplasm. It catalyses the reaction L-threonylcarbamoyladenylate + adenosine(37) in tRNA = N(6)-L-threonylcarbamoyladenosine(37) in tRNA + AMP + H(+). Functionally, required for the formation of a threonylcarbamoyl group on adenosine at position 37 (t(6)A37) in tRNAs that read codons beginning with adenine. Is involved in the transfer of the threonylcarbamoyl moiety of threonylcarbamoyl-AMP (TC-AMP) to the N6 group of A37, together with TsaE and TsaB. TsaD likely plays a direct catalytic role in this reaction. This is tRNA N6-adenosine threonylcarbamoyltransferase from Wigglesworthia glossinidia brevipalpis.